Reading from the N-terminus, the 592-residue chain is Aspartate--tRNA(Asp/Asn) ligase (592 aa).

Position 182 (Glu-182) interacts with L-aspartate. The interval 206-209 is aspartate; the sequence is QIFK. Arg-228 contacts L-aspartate. ATP-binding positions include 228–230 and Gln-237; that span reads RDE. His-455 contacts L-aspartate. Glu-489 provides a ligand contact to ATP. Residue Arg-496 coordinates L-aspartate. 541 to 544 serves as a coordination point for ATP; the sequence is GLDR.

Belongs to the class-II aminoacyl-tRNA synthetase family. Type 1 subfamily. Homodimer.

Its subcellular location is the cytoplasm. The enzyme catalyses tRNA(Asx) + L-aspartate + ATP = L-aspartyl-tRNA(Asx) + AMP + diphosphate. In terms of biological role, aspartyl-tRNA synthetase with relaxed tRNA specificity since it is able to aspartylate not only its cognate tRNA(Asp) but also tRNA(Asn). Reaction proceeds in two steps: L-aspartate is first activated by ATP to form Asp-AMP and then transferred to the acceptor end of tRNA(Asp/Asn). The protein is Aspartate--tRNA(Asp/Asn) ligase of Caldanaerobacter subterraneus subsp. tengcongensis (strain DSM 15242 / JCM 11007 / NBRC 100824 / MB4) (Thermoanaerobacter tengcongensis).